The primary structure comprises 494 residues: Alpha-amylase-related protein (494 aa).

Positions 1-20 (MFKFALALTLCLAGASLSLA) are cleaved as a signal peptide. Q21 carries the pyrrolidone carboxylic acid modification. C48 and C104 are oxidised to a cystine. Positions 118, 169, and 178 each coordinate Ca(2+). A disulfide bridge links C157 with C171. R206 lines the chloride pocket. D208 (nucleophile) is an active-site residue. Position 212 (H212) interacts with Ca(2+). E245 acts as the Proton donor in catalysis. Chloride is bound by residues N308 and R343. 3 disulfide bridges follow: C376–C382, C418–C441, and C448–C460.

It belongs to the glycosyl hydrolase 13 family. As to quaternary structure, monomer. The cofactor is Ca(2+). Chloride is required as a cofactor.

It localises to the secreted. The enzyme catalyses Endohydrolysis of (1-&gt;4)-alpha-D-glucosidic linkages in polysaccharides containing three or more (1-&gt;4)-alpha-linked D-glucose units.. In Drosophila dossoui (Fruit fly), this protein is Alpha-amylase-related protein (Amyrel).